Here is a 549-residue protein sequence, read N- to C-terminus: Glucose-6-phosphate isomerase (549 aa).

3 positions are modified to N6-acetyllysine: K80, K228, and K234. E355 functions as the Proton donor in the catalytic mechanism. Active-site residues include H386 and K514.

It belongs to the GPI family.

It is found in the cytoplasm. It catalyses the reaction alpha-D-glucose 6-phosphate = beta-D-fructose 6-phosphate. Its pathway is carbohydrate biosynthesis; gluconeogenesis. The protein operates within carbohydrate degradation; glycolysis; D-glyceraldehyde 3-phosphate and glycerone phosphate from D-glucose: step 2/4. In terms of biological role, catalyzes the reversible isomerization of glucose-6-phosphate to fructose-6-phosphate. This chain is Glucose-6-phosphate isomerase, found in Shigella flexneri serotype 5b (strain 8401).